The chain runs to 187 residues: Cytochrome b-245 chaperone 1 (187 aa).

The helical transmembrane segment at 20–42 threads the bilayer; the sequence is GIRSWSLLVGILSIGLAAAYYSG. A Phosphoserine modification is found at S168.

This sequence belongs to the CYBC1 family. In terms of assembly, interacts with CYBB; CYBC1 may act as a chaperone stabilizing Cytochrome b-245 heterodimer. Highly expressed in macrophages, neutrophils and monocytes.

The protein resides in the endoplasmic reticulum membrane. Its function is as follows. Functions as a chaperone necessary for a stable expression of the CYBA and CYBB subunits of the cytochrome b-245 heterodimer. Controls the phagocyte respiratory burst and is essential for innate immunity. The polypeptide is Cytochrome b-245 chaperone 1 (Homo sapiens (Human)).